The sequence spans 876 residues: Aspartate--tRNA(Asp/Asn) ligase (876 aa).

The interval 1–278 (MAATDTPWRP…FGFKRAYEGF (278 aa)) is unknown. Residues 279–876 (MHVYRSHTCG…PKPKKEVKEG (598 aa)) are aspartyl-tRNA synthetase. Glutamate 453 serves as a coordination point for L-aspartate. Residues 477–480 (QQFK) are aspartate. L-aspartate is bound by residues arginine 499 and histidine 729. 499-501 (RDE) contacts ATP. Glutamate 763 contributes to the ATP binding site. Arginine 770 is an L-aspartate binding site. 815–818 (GVDR) lines the ATP pocket.

The protein belongs to the class-II aminoacyl-tRNA synthetase family. Type 1 subfamily. In terms of assembly, homodimer.

The protein localises to the cytoplasm. The catalysed reaction is tRNA(Asx) + L-aspartate + ATP = L-aspartyl-tRNA(Asx) + AMP + diphosphate. In terms of biological role, aspartyl-tRNA synthetase with relaxed tRNA specificity since it is able to aspartylate not only its cognate tRNA(Asp) but also tRNA(Asn). Reaction proceeds in two steps: L-aspartate is first activated by ATP to form Asp-AMP and then transferred to the acceptor end of tRNA(Asp/Asn). The chain is Aspartate--tRNA(Asp/Asn) ligase (aspS) from Paramagnetospirillum magneticum (strain ATCC 700264 / AMB-1) (Magnetospirillum magneticum).